The primary structure comprises 377 residues: Nitric oxide reductase FlRd-NAD(+) reductase (377 aa).

Belongs to the FAD-dependent oxidoreductase family. It depends on FAD as a cofactor.

Its subcellular location is the cytoplasm. The catalysed reaction is 2 reduced [nitric oxide reductase rubredoxin domain] + NAD(+) + H(+) = 2 oxidized [nitric oxide reductase rubredoxin domain] + NADH. It participates in nitrogen metabolism; nitric oxide reduction. One of at least two accessory proteins for anaerobic nitric oxide (NO) reductase. Reduces the rubredoxin moiety of NO reductase. In Salmonella enteritidis PT4 (strain P125109), this protein is Nitric oxide reductase FlRd-NAD(+) reductase.